The following is a 438-amino-acid chain: uncharacterized protein (438 aa).

Disordered stretches follow at residues M1–P22 and D156–P264. The segment covering D156–K170 has biased composition (basic and acidic residues). Over residues S171–S189 the composition is skewed to low complexity. Positions T191–S206 are enriched in basic and acidic residues.

This sequence belongs to the adhesin P1 family.

This is an uncharacterized protein from Mycoplasma pneumoniae (strain ATCC 29342 / M129 / Subtype 1) (Mycoplasmoides pneumoniae).